We begin with the raw amino-acid sequence, 169 residues long: NADH-quinone oxidoreductase subunit B (169 aa).

Positions 42, 43, 107, and 136 each coordinate [4Fe-4S] cluster.

Belongs to the complex I 20 kDa subunit family. NDH-1 is composed of 14 different subunits. Subunits NuoB, C, D, E, F, and G constitute the peripheral sector of the complex. [4Fe-4S] cluster is required as a cofactor.

Its subcellular location is the cell inner membrane. It carries out the reaction a quinone + NADH + 5 H(+)(in) = a quinol + NAD(+) + 4 H(+)(out). Functionally, NDH-1 shuttles electrons from NADH, via FMN and iron-sulfur (Fe-S) centers, to quinones in the respiratory chain. The immediate electron acceptor for the enzyme in this species is believed to be ubiquinone. Couples the redox reaction to proton translocation (for every two electrons transferred, four hydrogen ions are translocated across the cytoplasmic membrane), and thus conserves the redox energy in a proton gradient. The sequence is that of NADH-quinone oxidoreductase subunit B from Nitratiruptor sp. (strain SB155-2).